The primary structure comprises 329 residues: Putative glucose ABC transporter permease protein TsgC13 (329 aa).

7 helical membrane-spanning segments follow: residues 3 to 23 (FAAGLLNATVQAATVLLLAGL), 32 to 52 (GVLNLGVEGMMLVGALGGFVV), 60 to 80 (WLGFGVGIACGMALAAVHAFL), 89 to 109 (VISGVMLTLLGTGLTTFFGSG), 139 to 161 (AFFRSTATDYLALLAVPVVWFFL), 193 to 213 (LAVIIGGGFAGAAGAHLSLAF), and 216 to 236 (LWVPGMTVGRGWIAVALVVFA).

Belongs to the binding-protein-dependent transport system permease family. The complex is composed of two ATP-binding proteins (TsgD13), two transmembrane proteins (TsgB13 and TsgC13) and a solute-binding protein (TsgA13).

Its subcellular location is the cell membrane. Its function is as follows. Part of an ABC transporter complex involved in glucose import (Potential). Responsible for the translocation of the substrate across the membrane. This is Putative glucose ABC transporter permease protein TsgC13 (tsgC13) from Haloferax volcanii (strain ATCC 29605 / DSM 3757 / JCM 8879 / NBRC 14742 / NCIMB 2012 / VKM B-1768 / DS2) (Halobacterium volcanii).